The sequence spans 70 residues: Cold shock-like protein CspJ (70 aa).

Positions 7-67 constitute a CSD domain; sequence GLVKWFNPEK…GPKGPSAVNV (61 aa).

The protein resides in the cytoplasm. This Salmonella typhi protein is Cold shock-like protein CspJ (cspJ).